The primary structure comprises 158 residues: Peptide deformylase (158 aa).

Positions 88 and 130 each coordinate Fe cation. Residue Glu131 is part of the active site. Residue His134 coordinates Fe cation.

The protein belongs to the polypeptide deformylase family. Fe(2+) serves as cofactor.

It carries out the reaction N-terminal N-formyl-L-methionyl-[peptide] + H2O = N-terminal L-methionyl-[peptide] + formate. Functionally, removes the formyl group from the N-terminal Met of newly synthesized proteins. Requires at least a dipeptide for an efficient rate of reaction. N-terminal L-methionine is a prerequisite for activity but the enzyme has broad specificity at other positions. The chain is Peptide deformylase from Agathobacter rectalis (strain ATCC 33656 / DSM 3377 / JCM 17463 / KCTC 5835 / VPI 0990) (Eubacterium rectale).